The following is a 57-amino-acid chain: MSKIFLRKGETIDETLRRFKREVAKNGVLAEARRKEHYIKPSVQRKNLQKSMRGKRR.

This sequence belongs to the bacterial ribosomal protein bS21 family.

The protein is Small ribosomal subunit protein bS21 of Phytoplasma australiense.